Reading from the N-terminus, the 292-residue chain is MLGAWAVEGTAVALLRLLLLLLPPAIRGPGLGVAGVAGAAGAGLPESVIWAVNAGGEAHVDVHGIHFRKDPLEGRVGRASDYGMKLPILRSNPEDQILYQTERYNEETFGYEVPIKEEGDYVLVLKFAEVYFAQSQQKVFDVRLNGHVVVKDLDIFDRVGHSTAHDEIIPMSIRKGKLSVQGEVSTFTGKLYIEFVKGYYDNPKVCALYIMAGTVDDVPKLQPHPGLEKKEEEEEEEEYDEGSNLKKQTNKNRVQSGPRTPNPYASDNSSLMFPILVAFGVFIPTLFCLCRL.

The N-terminal stretch at 1 to 28 (MLGAWAVEGTAVALLRLLLLLLPPAIRG) is a signal peptide. Residues 29-269 (PGLGVAGVAG…TPNPYASDNS (241 aa)) lie on the Lumenal side of the membrane. Residues Y82, Y104, Y131, F132, and D201 each contribute to the a carbohydrate site. The disordered stretch occupies residues 221–265 (LQPHPGLEKKEEEEEEEEYDEGSNLKKQTNKNRVQSGPRTPNPYA). Residues 231–241 (EEEEEEEEYDE) show a composition bias toward acidic residues. The segment covering 245–265 (LKKQTNKNRVQSGPRTPNPYA) has biased composition (polar residues). Residue N268 is glycosylated (N-linked (GlcNAc...) asparagine). The chain crosses the membrane as a helical span at residues 270–290 (SLMFPILVAFGVFIPTLFCLC). Topologically, residues 291–292 (RL) are cytoplasmic.

The protein belongs to the malectin family. Interacts with the oligosaccharyltransferase (OST) complex.

It is found in the endoplasmic reticulum membrane. Functionally, carbohydrate-binding protein with a strong ligand preference for Glc2-N-glycan. May play a role in the early steps of protein N-glycosylation. The protein is Malectin of Homo sapiens (Human).